Here is an 87-residue protein sequence, read N- to C-terminus: Small ribosomal subunit protein uS17 (87 aa).

Belongs to the universal ribosomal protein uS17 family. Part of the 30S ribosomal subunit.

Functionally, one of the primary rRNA binding proteins, it binds specifically to the 5'-end of 16S ribosomal RNA. This is Small ribosomal subunit protein uS17 from Thiobacillus denitrificans (strain ATCC 25259 / T1).